The following is a 284-amino-acid chain: D-tagatose-1,6-bisphosphate aldolase subunit GatY (284 aa).

The active-site Proton donor is the aspartate 82. The Zn(2+) site is built by histidine 83 and histidine 180. Glycine 181 serves as a coordination point for dihydroxyacetone phosphate. Zn(2+) is bound at residue histidine 208. Residues 209 to 211 and 230 to 233 contribute to the dihydroxyacetone phosphate site; these read GAS and NVAT.

It belongs to the class II fructose-bisphosphate aldolase family. TagBP aldolase GatY subfamily. In terms of assembly, forms a complex with GatZ. Zn(2+) is required as a cofactor.

The catalysed reaction is D-tagatofuranose 1,6-bisphosphate = D-glyceraldehyde 3-phosphate + dihydroxyacetone phosphate. It functions in the pathway carbohydrate metabolism; D-tagatose 6-phosphate degradation; D-glyceraldehyde 3-phosphate and glycerone phosphate from D-tagatose 6-phosphate: step 2/2. Its function is as follows. Catalytic subunit of the tagatose-1,6-bisphosphate aldolase GatYZ, which catalyzes the reversible aldol condensation of dihydroxyacetone phosphate (DHAP or glycerone-phosphate) with glyceraldehyde 3-phosphate (G3P) to produce tagatose 1,6-bisphosphate (TBP). Requires GatZ subunit for full activity and stability. Is involved in the catabolism of galactitol. This chain is D-tagatose-1,6-bisphosphate aldolase subunit GatY, found in Escherichia coli (strain SMS-3-5 / SECEC).